The sequence spans 265 residues: Cell adhesion molecule CEACAM7 (265 aa).

The first 35 residues, 1 to 35 (MGSPSACPYRVCIPWQGLLLTASLLTFWNLPNSAQ), serve as a signal peptide directing secretion. The Ig-like V-type domain maps to 36 to 142 (TNIDVVPFNV…EEVTRQFYVF (107 aa)). N-linked (GlcNAc...) asparagine glycosylation is found at Asn-57, Asn-85, Asn-105, Asn-112, Asn-174, Asn-183, and Asn-198. Residues 146-233 (PKPSITSNNF…ASRSDPVTLN (88 aa)) enclose the Ig-like C2-type domain. Cys-168 and Cys-216 form a disulfide bridge. The GPI-anchor amidated serine moiety is linked to residue Ser-242. Positions 243 to 265 (SPDLSAGTAVSIMIGVLAGMALI) are cleaved as a propeptide — removed in mature form.

It belongs to the immunoglobulin superfamily. CEA family. Homodimer. In terms of tissue distribution, expressed in columnar epithelial cells of the colon (at protein level). Strongly down-regulated in colonic adenocarcinomas.

The protein localises to the cell membrane. It is found in the apical cell membrane. The polypeptide is Cell adhesion molecule CEACAM7 (Homo sapiens (Human)).